The following is a 459-amino-acid chain: Phosphomethylpyrimidine synthase (459 aa).

Substrate is bound by residues Asn80, Met109, Tyr139, His175, 195 to 197 (SRG), 236 to 239 (DSLR), and Glu275. A Zn(2+)-binding site is contributed by His279. Substrate is bound at residue Tyr302. Residue His343 participates in Zn(2+) binding. [4Fe-4S] cluster-binding residues include Cys423, Cys426, and Cys431.

The protein belongs to the ThiC family. [4Fe-4S] cluster serves as cofactor.

The catalysed reaction is 5-amino-1-(5-phospho-beta-D-ribosyl)imidazole + S-adenosyl-L-methionine = 4-amino-2-methyl-5-(phosphooxymethyl)pyrimidine + CO + 5'-deoxyadenosine + formate + L-methionine + 3 H(+). The protein operates within cofactor biosynthesis; thiamine diphosphate biosynthesis. Catalyzes the synthesis of the hydroxymethylpyrimidine phosphate (HMP-P) moiety of thiamine from aminoimidazole ribotide (AIR) in a radical S-adenosyl-L-methionine (SAM)-dependent reaction. The protein is Phosphomethylpyrimidine synthase of Prochlorococcus marinus (strain MIT 9211).